Here is a 504-residue protein sequence, read N- to C-terminus: Probable periplasmic serine endoprotease DegP-like (504 aa).

The signal sequence occupies residues 1–26 (MLKTTTVAGLAAVLLTTGLPAEVAQS). The segment covering 102–118 (RADRWRDRRGPRGEGRL) has biased composition (basic and acidic residues). The interval 102–122 (RADRWRDRRGPRGEGRLRPRA) is disordered. Residues 113–286 (RGEGRLRPRA…PASVAKDVVD (174 aa)) are serine protease. Active-site charge relay system residues include His-140, Asp-170, and Ser-244. Residues 242–244 (GNS) and 299–303 (LGVQI) each bind substrate. PDZ domains lie at 287–378 (SLIK…LWRS) and 401–491 (ATGE…IEAQ). Disordered stretches follow at residues 389 to 411 (GTLP…DEGQ) and 428 to 447 (EDGK…AGDR).

Belongs to the peptidase S1C family.

The protein resides in the periplasm. The enzyme catalyses Acts on substrates that are at least partially unfolded. The cleavage site P1 residue is normally between a pair of hydrophobic residues, such as Val-|-Val.. In terms of biological role, might be efficient in the degradation of transiently denatured and unfolded proteins which accumulate in the periplasm following stress conditions. This Rhizobium meliloti (strain 1021) (Ensifer meliloti) protein is Probable periplasmic serine endoprotease DegP-like (degP1).